The primary structure comprises 430 residues: NAD(P)(+) glycohydrolase toxin Tse6 (430 aa).

A run of 3 helical transmembrane segments spans residues Phe-17 to Val-37, Leu-46 to Val-66, and Leu-193 to Leu-213.

In terms of assembly, interacts with Tsi6, VgrG1a, EagT6 and EF-Tu.

Its subcellular location is the membrane. The catalysed reaction is NAD(+) + H2O = ADP-D-ribose + nicotinamide + H(+). In terms of biological role, type VI secretion exported toxin that acts as a glycohydrolase on bacterial target cells and degrades the essential dinucleotides NAD(+) and NADP(+), thereby inducing bacteriostasis. The activity resides in the C-terminal region that is initially neutralized by the cognate immunity protein Tsi6. The protein is NAD(P)(+) glycohydrolase toxin Tse6 of Pseudomonas aeruginosa (strain ATCC 15692 / DSM 22644 / CIP 104116 / JCM 14847 / LMG 12228 / 1C / PRS 101 / PAO1).